The following is a 310-amino-acid chain: S-adenosylmethionine-dependent nucleotide dehydratase (310 aa).

The Radical SAM core domain maps to 3-221 (PAIPPTINLH…VERHRKVESS (219 aa)). The [4Fe-4S] cluster site is built by Cys17, Cys21, and Cys24.

Belongs to the radical SAM superfamily. Viperin family. The cofactor is [4Fe-4S] cluster.

The catalysed reaction is GTP + AH2 + S-adenosyl-L-methionine = 3'-deoxy-3',4'-didehydro-GTP + 5'-deoxyadenosine + L-methionine + A + H2O + H(+). Functionally, expression of pVip15 in E.coli (strain MG1655) confers resistance to phage T7; prevents culture collapse upon infection. Catalyzes the conversion of guanosine triphosphate (GTP) to 3'-deoxy-3',4'-didehydro-GTP (ddhGTP), probably via a SAM-dependent radical mechanism. The modified nucleotide represses transcription from T7 RNA polymerase-directed genes (possibly by acting as chain terminators), strongly suggesting these nucleotides block viral polymerase transcription. This Coraliomargarita akajimensis (strain DSM 45221 / IAM 15411 / JCM 23193 / KCTC 12865 / 04OKA010-24) protein is S-adenosylmethionine-dependent nucleotide dehydratase.